The sequence spans 227 residues: Thymidylate kinase (227 aa).

16–23 (GIDGAGKT) provides a ligand contact to ATP.

It belongs to the thymidylate kinase family.

The catalysed reaction is dTMP + ATP = dTDP + ADP. Its function is as follows. Phosphorylation of dTMP to form dTDP in both de novo and salvage pathways of dTTP synthesis. The sequence is that of Thymidylate kinase from Xanthomonas oryzae pv. oryzae (strain MAFF 311018).